A 526-amino-acid chain; its full sequence is Medium/long-chain-fatty-acid--[acyl-carrier-protein] ligase MbtM (526 aa).

N6-acetyllysine; by Pat is present on residues lysine 260 and lysine 511.

Belongs to the ATP-dependent AMP-binding enzyme family. Post-translationally, acetylated on Lys-511 and Lys-260 by Pat. Lys-511 is the major acetylation site. Acetylation results in the inactivation of the enzyme.

The catalysed reaction is a long-chain fatty acid + holo-[ACP] + ATP = a long-chain fatty acyl-[ACP] + AMP + diphosphate. The enzyme catalyses a medium-chain fatty acid + holo-[ACP] + ATP = a medium-chain fatty acyl-[ACP] + AMP + diphosphate. It carries out the reaction hexadecanoate + holo-[ACP] + ATP = hexadecanoyl-[ACP] + AMP + diphosphate. It catalyses the reaction hexadecanoate + ATP + H(+) = hexadecanoyl-AMP + diphosphate. The catalysed reaction is hexadecanoyl-AMP + holo-[ACP] = hexadecanoyl-[ACP] + AMP + H(+). The enzyme catalyses dodecanoate + holo-[ACP] + ATP = dodecanoyl-[ACP] + AMP + diphosphate. It carries out the reaction dodecanoate + ATP + H(+) = dodecanoyl-AMP + diphosphate. It catalyses the reaction dodecanoyl-AMP + holo-[ACP] = dodecanoyl-[ACP] + AMP + H(+). The protein operates within siderophore biosynthesis; mycobactin biosynthesis. With respect to regulation, reversibly inactivated by post-translational acetylation by Pat in a cAMP-dependent manner and reactivated by Sir2 deacylase. Activates lipidic moieties required for mycobactin biosynthesis. Converts medium- to long-chain aliphatic fatty acids into acyl adenylate, which is further transferred on to the phosphopantetheine arm of the carrier protein MbtL. Shows a strong preference for palmitic acid (C16) and cannot use short-chain fatty acids. Proceeds via a Bi Uni Uni Bi ping-pong mechanism. During the first half-reaction (adenylation), fatty acid binds first to the free enzyme, followed by ATP and the release of pyrophosphate to form the adenylate intermediate. During the second half-reaction (ligation), holo-MbtL binds to the enzyme followed by the release of products AMP and acylated MbtL. The polypeptide is Medium/long-chain-fatty-acid--[acyl-carrier-protein] ligase MbtM (Mycolicibacterium smegmatis (strain ATCC 700084 / mc(2)155) (Mycobacterium smegmatis)).